The chain runs to 150 residues: Large ribosomal subunit protein uL13 (150 aa).

It belongs to the universal ribosomal protein uL13 family. As to quaternary structure, part of the 50S ribosomal subunit.

Its function is as follows. This protein is one of the early assembly proteins of the 50S ribosomal subunit, although it is not seen to bind rRNA by itself. It is important during the early stages of 50S assembly. The protein is Large ribosomal subunit protein uL13 of Chlamydia abortus (strain DSM 27085 / S26/3) (Chlamydophila abortus).